Here is a 267-residue protein sequence, read N- to C-terminus: MRRIAVMGAAGRMGKTLIEAVQQTPGAGLTAAIDRPDSSLVGADAGELAALGRIGVLLCDDLAKVVDEFDVLIDFTHPSVTLKNLAFCRKAGKAMIIGTTGFSVEEKQLLAEAGKEIPIVFAANFSVGVNLSLKLLDMAARVLGDDVDIEIIEAHHRHKVDAPSGTALRMGEVVANALGRDLQEVAVYGREGQTGARDRKTIGFATVRAGDVVGDHTVLFAAEGERLEITHKASSRMTFAKGAVRAALWLDGREPGLYDMQDVLELR.

NAD(+) is bound by residues 8-13 (GAAGRM) and Asp-34. An NADP(+)-binding site is contributed by Arg-35. NAD(+) contacts are provided by residues 98 to 100 (GTT) and 122 to 125 (AANF). His-155 acts as the Proton donor/acceptor in catalysis. His-156 contacts (S)-2,3,4,5-tetrahydrodipicolinate. The Proton donor role is filled by Lys-159. Residue 165-166 (GT) coordinates (S)-2,3,4,5-tetrahydrodipicolinate.

Belongs to the DapB family.

The protein resides in the cytoplasm. It catalyses the reaction (S)-2,3,4,5-tetrahydrodipicolinate + NAD(+) + H2O = (2S,4S)-4-hydroxy-2,3,4,5-tetrahydrodipicolinate + NADH + H(+). The catalysed reaction is (S)-2,3,4,5-tetrahydrodipicolinate + NADP(+) + H2O = (2S,4S)-4-hydroxy-2,3,4,5-tetrahydrodipicolinate + NADPH + H(+). It functions in the pathway amino-acid biosynthesis; L-lysine biosynthesis via DAP pathway; (S)-tetrahydrodipicolinate from L-aspartate: step 4/4. Catalyzes the conversion of 4-hydroxy-tetrahydrodipicolinate (HTPA) to tetrahydrodipicolinate. The sequence is that of 4-hydroxy-tetrahydrodipicolinate reductase from Pseudomonas entomophila (strain L48).